Here is a 338-residue protein sequence, read N- to C-terminus: Sesquiterpene synthase 1 (338 aa).

Positions 93, 228, 232, and 236 each coordinate Mg(2+). The short motif at 93-97 is the DDXXD motif element; it reads DNISD. Residues 228-236 carry the NSE/DTE motif motif; it reads NDIFSYNVE. Positions 316 and 317 each coordinate (2E,6E)-farnesyl diphosphate.

Belongs to the terpene synthase family. Mg(2+) serves as cofactor.

It carries out the reaction (2E,6E)-farnesyl diphosphate = alpha-copaene + diphosphate. The enzyme catalyses (2E,6E)-farnesyl diphosphate = beta-copaene + diphosphate. It catalyses the reaction (2E,6E)-farnesyl diphosphate = alpha-muurolene + diphosphate. The catalysed reaction is (2E,6E)-farnesyl diphosphate = gamma-muurolene + diphosphate. It carries out the reaction (2E,6E)-farnesyl diphosphate = delta-cadinene + diphosphate. Functionally, terpene cyclase that catalyzes the cyclization of farnesyl diphosphate (FPP) to various sesquiterpenes, including alpha-copaene, beta-copaene, beta-elemene, alpha-muurolene, gamma-muurolene and delta-cadinene. The chain is Sesquiterpene synthase 1 from Postia placenta (strain ATCC 44394 / Madison 698-R) (Brown rot fungus).